The chain runs to 882 residues: Valine--tRNA ligase (882 aa).

A 'HIGH' region motif is present at residues 48–58 (PNVTGKLHLGH). The 'KMSKS' region signature appears at 524–528 (KMSKS). ATP is bound at residue lysine 527. Residues 809–882 (LAELLDLDEE…KRLAELKAAR (74 aa)) adopt a coiled-coil conformation. A disordered region spans residues 844–866 (GFTDRAPEKVVQEERDKQADYEQ). The segment covering 845–863 (FTDRAPEKVVQEERDKQAD) has biased composition (basic and acidic residues).

The protein belongs to the class-I aminoacyl-tRNA synthetase family. ValS type 1 subfamily. Monomer.

It localises to the cytoplasm. The catalysed reaction is tRNA(Val) + L-valine + ATP = L-valyl-tRNA(Val) + AMP + diphosphate. Catalyzes the attachment of valine to tRNA(Val). As ValRS can inadvertently accommodate and process structurally similar amino acids such as threonine, to avoid such errors, it has a 'posttransfer' editing activity that hydrolyzes mischarged Thr-tRNA(Val) in a tRNA-dependent manner. This chain is Valine--tRNA ligase, found in Latilactobacillus sakei subsp. sakei (strain 23K) (Lactobacillus sakei subsp. sakei).